Consider the following 372-residue polypeptide: Glutamate 5-kinase (372 aa).

Residue lysine 14 coordinates ATP. Residues serine 54, aspartate 141, and asparagine 153 each contribute to the substrate site. ATP is bound at residue 173 to 174 (TD). The region spanning 280-358 (RGRVVIDGGA…SEIESVLGHL (79 aa)) is the PUA domain.

It belongs to the glutamate 5-kinase family.

The protein resides in the cytoplasm. The catalysed reaction is L-glutamate + ATP = L-glutamyl 5-phosphate + ADP. It participates in amino-acid biosynthesis; L-proline biosynthesis; L-glutamate 5-semialdehyde from L-glutamate: step 1/2. Functionally, catalyzes the transfer of a phosphate group to glutamate to form L-glutamate 5-phosphate. This chain is Glutamate 5-kinase, found in Cupriavidus taiwanensis (strain DSM 17343 / BCRC 17206 / CCUG 44338 / CIP 107171 / LMG 19424 / R1) (Ralstonia taiwanensis (strain LMG 19424)).